The following is a 291-amino-acid chain: Phosphatidylglycerol--prolipoprotein diacylglyceryl transferase (291 aa).

7 consecutive transmembrane segments (helical) span residues Val21–Ala41, Leu60–Tyr80, Trp96–Phe116, Phe130–Gly150, Ser198–Ile218, Gly225–Phe245, and Ile260–Trp280. A 1,2-diacyl-sn-glycero-3-phospho-(1'-sn-glycerol) is bound at residue Arg143.

The protein belongs to the Lgt family.

It is found in the cell inner membrane. It catalyses the reaction L-cysteinyl-[prolipoprotein] + a 1,2-diacyl-sn-glycero-3-phospho-(1'-sn-glycerol) = an S-1,2-diacyl-sn-glyceryl-L-cysteinyl-[prolipoprotein] + sn-glycerol 1-phosphate + H(+). Its pathway is protein modification; lipoprotein biosynthesis (diacylglyceryl transfer). Its function is as follows. Catalyzes the transfer of the diacylglyceryl group from phosphatidylglycerol to the sulfhydryl group of the N-terminal cysteine of a prolipoprotein, the first step in the formation of mature lipoproteins. The protein is Phosphatidylglycerol--prolipoprotein diacylglyceryl transferase of Salmonella choleraesuis (strain SC-B67).